The following is a 401-amino-acid chain: MIGLIGIRKNTPLEIREKFIVKSKKYNEYFGELLKELNEVVILATCNRTEIYFNASLNEEELLKKIFDIFNWDYEYKKYVFITNNKDAYRHLFEVCSGFHSKILGEDQILGQVKDAYEEALEFKAVSLELHRLFQEAITCGKRFRKEAKLFEIPVSSSSIVVSEAIKRECTKFMVLGYGEVGQLVMKYLLSHKIQTVYLVVRNPKIKDEIQDERVKVITFEEKNKYINSIECIISCTSAPHPVVKTEDISESGSRLVIYDLSVPRDVEKEVALLSRTEVYNIDTISRIDDENKKLRKDKMEDNRHIMNKYLKEYDEWLKLRSISHVIKNLKTVGNDVYEKRVQTFSHKSKDKNDIALAHKLIKSTSDFYINRAIEVIKEETLKGCGEEWIGIIEKIFMTKE.

Substrate-binding positions include 45–48 (TCNR), S101, 106–108 (EDQ), and Q112. The active-site Nucleophile is C46. 177-182 (GYGEVG) is a binding site for NADP(+).

Belongs to the glutamyl-tRNA reductase family. In terms of assembly, homodimer.

The catalysed reaction is (S)-4-amino-5-oxopentanoate + tRNA(Glu) + NADP(+) = L-glutamyl-tRNA(Glu) + NADPH + H(+). It participates in porphyrin-containing compound metabolism; protoporphyrin-IX biosynthesis; 5-aminolevulinate from L-glutamyl-tRNA(Glu): step 1/2. Functionally, catalyzes the NADPH-dependent reduction of glutamyl-tRNA(Glu) to glutamate 1-semialdehyde (GSA). The sequence is that of Glutamyl-tRNA reductase from Clostridium beijerinckii (strain ATCC 51743 / NCIMB 8052) (Clostridium acetobutylicum).